Consider the following 292-residue polypeptide: T-box transcription factor tbx-9 (292 aa).

Residues 10–194 (GSQETLWKIF…HNSFAKGFRD (185 aa)) constitute a DNA-binding region (T-box). Disordered stretches follow at residues 192–227 (FRDG…EVAP) and 265–292 (STPS…DIVG). Low complexity-rich tracts occupy residues 204–223 (PSYS…RSPP) and 265–275 (STPSSSSSELS). Acidic residues predominate over residues 280 to 292 (EDQEVEEDIDIVG).

Its subcellular location is the nucleus. In terms of biological role, transcription factor. Involved in the control of early morphogenesis of the intestine, hypodermis and body-wall muscle. Involved in regulating expression of vab-7. Appears to have partially redundant function to tbx-8. Positively modulates expression of homeobox protein lin-39, perhaps by binding to regulatory regions of the lin-39 gene, acting in the vulval lineage. This chain is T-box transcription factor tbx-9 (tbx-9), found in Caenorhabditis elegans.